The chain runs to 274 residues: Penicillin-insensitive murein endopeptidase (274 aa).

The first 19 residues, 1 to 19 (MNKTAIALLALLASSASLA), serve as a signal peptide directing secretion. 3 disulfide bridges follow: cysteine 44–cysteine 265, cysteine 187–cysteine 235, and cysteine 216–cysteine 223. Positions 110, 113, 120, 147, 150, and 211 each coordinate Zn(2+). Positions 227–274 (PLPPPGDGCGAELQSWFEPPKPGTTKPEKKTPPPLPPSCQALLDEHVI) are disordered.

It belongs to the peptidase M74 family. In terms of assembly, dimer. Zn(2+) is required as a cofactor.

It localises to the periplasm. Its function is as follows. Murein endopeptidase that cleaves the D-alanyl-meso-2,6-diamino-pimelyl amide bond that connects peptidoglycan strands. Likely plays a role in the removal of murein from the sacculus. The chain is Penicillin-insensitive murein endopeptidase from Escherichia coli O1:K1 / APEC.